A 371-amino-acid chain; its full sequence is UDP-N-acetylglucosamine--N-acetylmuramyl-(pentapeptide) pyrophosphoryl-undecaprenol N-acetylglucosamine transferase (371 aa).

UDP-N-acetyl-alpha-D-glucosamine is bound by residues Thr15–Gly17, Asn126, Arg169, Ser197, and Gln298.

Belongs to the glycosyltransferase 28 family. MurG subfamily.

Its subcellular location is the cell inner membrane. The enzyme catalyses di-trans,octa-cis-undecaprenyl diphospho-N-acetyl-alpha-D-muramoyl-L-alanyl-D-glutamyl-meso-2,6-diaminopimeloyl-D-alanyl-D-alanine + UDP-N-acetyl-alpha-D-glucosamine = di-trans,octa-cis-undecaprenyl diphospho-[N-acetyl-alpha-D-glucosaminyl-(1-&gt;4)]-N-acetyl-alpha-D-muramoyl-L-alanyl-D-glutamyl-meso-2,6-diaminopimeloyl-D-alanyl-D-alanine + UDP + H(+). It functions in the pathway cell wall biogenesis; peptidoglycan biosynthesis. Its function is as follows. Cell wall formation. Catalyzes the transfer of a GlcNAc subunit on undecaprenyl-pyrophosphoryl-MurNAc-pentapeptide (lipid intermediate I) to form undecaprenyl-pyrophosphoryl-MurNAc-(pentapeptide)GlcNAc (lipid intermediate II). This is UDP-N-acetylglucosamine--N-acetylmuramyl-(pentapeptide) pyrophosphoryl-undecaprenol N-acetylglucosamine transferase from Paramagnetospirillum magneticum (strain ATCC 700264 / AMB-1) (Magnetospirillum magneticum).